We begin with the raw amino-acid sequence, 71 residues long: Plasticin-C2 (71 aa).

The N-terminal stretch at 1 to 22 (MAFLKKSLLLVLFLALVPLSIC) is a signal peptide. The propeptide occupies 23 to 45 (EEEKREEEDEEKQEDDDQSENKR). The segment at 25-46 (EKREEEDEEKQEDDDQSENKRG) is disordered. The span at 26 to 40 (KREEEDEEKQEDDDQ) shows a compositional bias: acidic residues. The residue at position 68 (N68) is an Asparagine amide. A propeptide spanning residues 70-71 (ES) is cleaved from the precursor.

The protein belongs to the frog skin active peptide (FSAP) family. Plasticin subfamily. Expressed by the skin glands.

It is found in the secreted. The protein localises to the target cell membrane. Its function is as follows. Neutral peptide with no antimicrobial activity. May act in synergy with cationic peptides by enhancing their activity. Has a moderate hemolytic activity. This Agalychnis callidryas (Red-eyed tree frog) protein is Plasticin-C2.